Reading from the N-terminus, the 294-residue chain is F-box protein SKIP3 (294 aa).

The F-box domain maps to 21-67 (SSTLDSLPEGCISNIISFTSPEDACVAAAVSKIFESAVKSDIVWEKF).

As to quaternary structure, part of a SCF (SKP1-cullin-F-box) protein ligase complex. Interacts with SKP1A/ASK1.

It participates in protein modification; protein ubiquitination. The chain is F-box protein SKIP3 (SKIP3) from Arabidopsis thaliana (Mouse-ear cress).